Consider the following 172-residue polypeptide: LOB domain-containing protein 4 (172 aa).

Residues 12–113 (SPCAACKLLR…AQLALAQAEV (102 aa)) enclose the LOB domain. Residues 125-152 (PGHGLCPDSPSSSGSPSSKQVSPQDNKG) form a disordered region. Residues 131-147 (PDSPSSSGSPSSKQVSP) are compositionally biased toward low complexity.

This sequence belongs to the LOB domain-containing protein family. Expressed in young shoots, roots, stems, leaves and flowers.

This Arabidopsis thaliana (Mouse-ear cress) protein is LOB domain-containing protein 4 (LBD4).